The following is a 191-amino-acid chain: Guanylate kinase (191 aa).

In terms of domain architecture, Guanylate kinase-like spans 6-184; it reads GLIIILSSPS…TIQQIHTIIL (179 aa). 13 to 20 serves as a coordination point for ATP; sequence SPSGAGKS.

The protein belongs to the guanylate kinase family.

The protein resides in the cytoplasm. It catalyses the reaction GMP + ATP = GDP + ADP. Essential for recycling GMP and indirectly, cGMP. This is Guanylate kinase from Rickettsia bellii (strain RML369-C).